Reading from the N-terminus, the 306-residue chain is GTP cyclohydrolase FolE2 (306 aa).

The protein belongs to the GTP cyclohydrolase IV family.

The enzyme catalyses GTP + H2O = 7,8-dihydroneopterin 3'-triphosphate + formate + H(+). Its pathway is cofactor biosynthesis; 7,8-dihydroneopterin triphosphate biosynthesis; 7,8-dihydroneopterin triphosphate from GTP: step 1/1. Its function is as follows. Converts GTP to 7,8-dihydroneopterin triphosphate. The polypeptide is GTP cyclohydrolase FolE2 (Pseudoalteromonas atlantica (strain T6c / ATCC BAA-1087)).